A 631-amino-acid chain; its full sequence is MAEQLVEAPAYARTLDRAVEYLLSCQKDEGYWWGPLLSNVTMEAEYVLLCHILDRVDRDRMEKIRRYLLHEQREDGTWALYPGGPPDLDTTIEAYVALKYIGMSRDEEPMQKALRFIQSQGGIESSRVFTRMWLALVGEYPWEKVPMVPPEIMFLGKRMPLNIYEFGSWARATVVALSIVMSRQPVFPLPERARVPELYETDVPPRRRGAKGGGGWIFDALDRALHGYQKLSVHPFRRAAEIRALDWLLERQAGDGSWGGIQPPWFYALIALKILDMTQHPAFIKGWEGLELYGVELDYGGWMFQASISPVWDTGLAVLALRAAGLPADHDRLVKAGEWLLDRQITVPGDWAVKRPNLKPGGFAFQFDNVYYPDVDDTAVVVWALNTLRLPDERRRRDAMTKGFRWIVGMQSSNGGWGAYDVDNTSDLPNHIPFCDFGEVTDPPSEDVTAHVLECFGSFGYDDAWKVIRRAVEYLKREQKPDGSWFGRWGVNYLYGTGAVVSALKAVGIDTREPYIQKALDWVEQHQNPDGGWGEDCRSYEDPAYAGKGASTPSQTAWALMALIAGGRAESEAARRGVQYLVETQRPDGGWDEPYYTGTGFPGDFYLGYTMYRHVFPTLALGRYKQAIERR.

PFTB repeat units lie at residues 15-56 (LDRA…LDRV), 61-102 (MEKI…KYIG), and 241-282 (EIRA…QHPA). Asp-376 functions as the Proton donor in the catalytic mechanism. PFTB repeat units follow at residues 400–441 (MTKG…GEVT), 468–508 (IRRA…KAVG), 516–557 (IQKA…SQTA), and 574–622 (ARRG…LALG).

The protein belongs to the terpene cyclase/mutase family. Homodimer.

The protein localises to the cell membrane. The enzyme catalyses squalene = hop-22(29)-ene. The catalysed reaction is squalene + H2O = hopan-22-ol. Its pathway is secondary metabolite biosynthesis; hopanoid biosynthesis. In terms of biological role, catalyzes the cyclization of squalene to two pentacyclic triterpenes, hop-22(29)-ene and hopan-22-ol (diplopterol); hopene and hopanol are formed at a constant ratio of 5:1. Is a key enzyme of hopanoid biosynthesis; hopanoids are components of the bacterial cytoplasmic membranes that play a vital role in stabilizing the membranes. In Alicyclobacillus acidocaldarius subsp. acidocaldarius (strain ATCC 27009 / DSM 446 / BCRC 14685 / JCM 5260 / KCTC 1825 / NBRC 15652 / NCIMB 11725 / NRRL B-14509 / 104-IA) (Bacillus acidocaldarius), this protein is Squalene--hopene cyclase (shc).